We begin with the raw amino-acid sequence, 380 residues long: Erythronate-4-phosphate dehydrogenase (380 aa).

2 residues coordinate substrate: Ser45 and Thr66. Residues 126–127, Asp146, Thr175, 206–208, and Asp232 each bind NAD(+); these read QV and ASR. Arg208 is a catalytic residue. Glu237 is an active-site residue. His254 functions as the Proton donor in the catalytic mechanism. Gly257 provides a ligand contact to NAD(+). Tyr258 serves as a coordination point for substrate.

The protein belongs to the D-isomer specific 2-hydroxyacid dehydrogenase family. PdxB subfamily. As to quaternary structure, homodimer.

The protein localises to the cytoplasm. The catalysed reaction is 4-phospho-D-erythronate + NAD(+) = (R)-3-hydroxy-2-oxo-4-phosphooxybutanoate + NADH + H(+). It functions in the pathway cofactor biosynthesis; pyridoxine 5'-phosphate biosynthesis; pyridoxine 5'-phosphate from D-erythrose 4-phosphate: step 2/5. In terms of biological role, catalyzes the oxidation of erythronate-4-phosphate to 3-hydroxy-2-oxo-4-phosphonooxybutanoate. This Pseudomonas aeruginosa (strain UCBPP-PA14) protein is Erythronate-4-phosphate dehydrogenase.